Reading from the N-terminus, the 333-residue chain is Phosphate acyltransferase (333 aa).

It belongs to the PlsX family. Homodimer. Probably interacts with PlsY.

Its subcellular location is the cytoplasm. It carries out the reaction a fatty acyl-[ACP] + phosphate = an acyl phosphate + holo-[ACP]. The protein operates within lipid metabolism; phospholipid metabolism. Catalyzes the reversible formation of acyl-phosphate (acyl-PO(4)) from acyl-[acyl-carrier-protein] (acyl-ACP). This enzyme utilizes acyl-ACP as fatty acyl donor, but not acyl-CoA. The chain is Phosphate acyltransferase from Enterococcus faecalis (strain ATCC 700802 / V583).